The sequence spans 253 residues: Ubiquinone/menaquinone biosynthesis C-methyltransferase UbiE (253 aa).

Residues Thr-76, Asp-97, and Asn-125–Ala-126 contribute to the S-adenosyl-L-methionine site.

It belongs to the class I-like SAM-binding methyltransferase superfamily. MenG/UbiE family.

It carries out the reaction a 2-demethylmenaquinol + S-adenosyl-L-methionine = a menaquinol + S-adenosyl-L-homocysteine + H(+). The enzyme catalyses a 2-methoxy-6-(all-trans-polyprenyl)benzene-1,4-diol + S-adenosyl-L-methionine = a 5-methoxy-2-methyl-3-(all-trans-polyprenyl)benzene-1,4-diol + S-adenosyl-L-homocysteine + H(+). The protein operates within quinol/quinone metabolism; menaquinone biosynthesis; menaquinol from 1,4-dihydroxy-2-naphthoate: step 2/2. It participates in cofactor biosynthesis; ubiquinone biosynthesis. Its function is as follows. Methyltransferase required for the conversion of demethylmenaquinol (DMKH2) to menaquinol (MKH2) and the conversion of 2-polyprenyl-6-methoxy-1,4-benzoquinol (DDMQH2) to 2-polyprenyl-3-methyl-6-methoxy-1,4-benzoquinol (DMQH2). The protein is Ubiquinone/menaquinone biosynthesis C-methyltransferase UbiE of Stenotrophomonas maltophilia (strain R551-3).